A 343-amino-acid polypeptide reads, in one-letter code: Uroporphyrinogen decarboxylase (343 aa).

Substrate contacts are provided by residues 25–29 (RQAGR), aspartate 75, tyrosine 152, serine 207, and histidine 323.

It belongs to the uroporphyrinogen decarboxylase family. Homodimer.

The protein localises to the cytoplasm. The enzyme catalyses uroporphyrinogen III + 4 H(+) = coproporphyrinogen III + 4 CO2. It functions in the pathway porphyrin-containing compound metabolism; protoporphyrin-IX biosynthesis; coproporphyrinogen-III from 5-aminolevulinate: step 4/4. Functionally, catalyzes the decarboxylation of four acetate groups of uroporphyrinogen-III to yield coproporphyrinogen-III. In Jannaschia sp. (strain CCS1), this protein is Uroporphyrinogen decarboxylase.